The primary structure comprises 698 residues: Elongation factor G (698 aa).

Positions 8 to 290 (ERYRNIGISA…AVIELLPSPV (283 aa)) constitute a tr-type G domain. GTP is bound by residues 17 to 24 (AHIDAGKT), 88 to 92 (DTPGH), and 142 to 145 (NKMD).

This sequence belongs to the TRAFAC class translation factor GTPase superfamily. Classic translation factor GTPase family. EF-G/EF-2 subfamily.

It is found in the cytoplasm. Functionally, catalyzes the GTP-dependent ribosomal translocation step during translation elongation. During this step, the ribosome changes from the pre-translocational (PRE) to the post-translocational (POST) state as the newly formed A-site-bound peptidyl-tRNA and P-site-bound deacylated tRNA move to the P and E sites, respectively. Catalyzes the coordinated movement of the two tRNA molecules, the mRNA and conformational changes in the ribosome. The protein is Elongation factor G of Aromatoleum aromaticum (strain DSM 19018 / LMG 30748 / EbN1) (Azoarcus sp. (strain EbN1)).